The chain runs to 106 residues: NADH-quinone oxidoreductase subunit K (106 aa).

3 consecutive transmembrane segments (helical) span residues isoleucine 8–valine 28, isoleucine 35–phenylalanine 55, and valine 66–leucine 86.

This sequence belongs to the complex I subunit 4L family. NDH-1 is composed of 14 different subunits. Subunits NuoA, H, J, K, L, M, N constitute the membrane sector of the complex.

It localises to the cell inner membrane. It carries out the reaction a quinone + NADH + 5 H(+)(in) = a quinol + NAD(+) + 4 H(+)(out). In terms of biological role, NDH-1 shuttles electrons from NADH, via FMN and iron-sulfur (Fe-S) centers, to quinones in the respiratory chain. The immediate electron acceptor for the enzyme in this species is believed to be a menaquinone. Couples the redox reaction to proton translocation (for every two electrons transferred, four hydrogen ions are translocated across the cytoplasmic membrane), and thus conserves the redox energy in a proton gradient. This is NADH-quinone oxidoreductase subunit K from Flavobacterium psychrophilum (strain ATCC 49511 / DSM 21280 / CIP 103535 / JIP02/86).